A 317-amino-acid chain; its full sequence is Ribosomal protein L11 methyltransferase (317 aa).

S-adenosyl-L-methionine is bound by residues Thr169, Gly190, Asp211, and Asn256.

This sequence belongs to the methyltransferase superfamily. PrmA family.

The protein resides in the cytoplasm. The enzyme catalyses L-lysyl-[protein] + 3 S-adenosyl-L-methionine = N(6),N(6),N(6)-trimethyl-L-lysyl-[protein] + 3 S-adenosyl-L-homocysteine + 3 H(+). Its function is as follows. Methylates ribosomal protein L11. This chain is Ribosomal protein L11 methyltransferase, found in Helicobacter hepaticus (strain ATCC 51449 / 3B1).